The following is a 478-amino-acid chain: Methionine aminopeptidase 2-1 (478 aa).

Residues 1–124 are disordered; that stretch reads MGSKSPEGHN…PRVPLSTLFP (124 aa). The span at 46–56 shows a compositional bias: acidic residues; that stretch reads NDDDDADDDEK. A compositionally biased stretch (basic residues) spans 92 to 104; sequence KKKKKRKRSKKKA. H230 contacts substrate. D251, D262, and H331 together coordinate a divalent metal cation. H339 contacts substrate. The a divalent metal cation site is built by E364 and E459.

Belongs to the peptidase M24A family. Methionine aminopeptidase eukaryotic type 2 subfamily. Co(2+) is required as a cofactor. It depends on Zn(2+) as a cofactor. Requires Mn(2+) as cofactor. The cofactor is Fe(2+).

The protein resides in the cytoplasm. It carries out the reaction Release of N-terminal amino acids, preferentially methionine, from peptides and arylamides.. Its function is as follows. Cotranslationally removes the N-terminal methionine from nascent proteins. The N-terminal methionine is often cleaved when the second residue in the primary sequence is small and uncharged (Met-Ala-, Cys, Gly, Pro, Ser, Thr, or Val). This Aspergillus clavatus (strain ATCC 1007 / CBS 513.65 / DSM 816 / NCTC 3887 / NRRL 1 / QM 1276 / 107) protein is Methionine aminopeptidase 2-1.